Here is a 221-residue protein sequence, read N- to C-terminus: Ras-related protein Rab-27A (221 aa).

The residue at position 2 (Ser-2) is an N-acetylserine. Ser-2 carries the phosphoserine modification. 16–24 (GDSGVGKTS) is a GTP binding site. The Effector region signature appears at 38 to 46 (FITTVGIDF). Residues 74–78 (DTAGQ), 133–136 (NKSD), and 163–165 (SAA) contribute to the GTP site. Residues Cys-123 and Cys-188 are joined by a disulfide bond. The segment at 202-221 (NGHTSADPLNEEKEKGSCGC) is disordered. Residues 211-221 (NEEKEKGSCGC) are compositionally biased toward basic and acidic residues. Residues Cys-219 and Cys-221 are each lipidated (S-geranylgeranyl cysteine). The residue at position 221 (Cys-221) is a Cysteine methyl ester.

This sequence belongs to the small GTPase superfamily. Rab family. As to quaternary structure, binds SYTL1, SLAC2B, MYRIP, SYTL3, SYTL4 and SYTL5. Interacts with RPH3A and RPH3A. Binds MLPH and SYTL2. Interacts with UNC13D. Does not interact with the BLOC-3 complex (heterodimer of HPS1 and HPS4). Interacts (GDP-bound form preferentially) with DENND10.

The protein localises to the membrane. It localises to the melanosome. Its subcellular location is the late endosome. It is found in the lysosome. It catalyses the reaction GTP + H2O = GDP + phosphate + H(+). Regulated by guanine nucleotide exchange factors (GEFs) which promote the exchange of bound GDP for free GTP, GTPase activating proteins (GAPs) which increase the GTP hydrolysis activity, and GDP dissociation inhibitors which inhibit the dissociation of the nucleotide from the GTPase. Activated by GEFs such as DENND10. In terms of biological role, small GTPase which cycles between active GTP-bound and inactive GDP-bound states. In its active state, binds to a variety of effector proteins to regulate homeostasis of late endocytic pathway, including endosomal positioning, maturation and secretion. Plays a role in cytotoxic granule exocytosis in lymphocytes. Required for both granule maturation and granule docking and priming at the immunologic synapse. The sequence is that of Ras-related protein Rab-27A (RAB27A) from Sus scrofa (Pig).